Consider the following 798-residue polypeptide: Integrin beta-1-A (798 aa).

The N-terminal stretch at 1–21 (MAHYPVFTVGLLTCLVLCINA) is a signal peptide. At 22–727 (QQGGTECLKA…VKEPECPSGP (706 aa)) the chain is on the extracellular side. Residues 27–77 (ECLKANAKSCGECIQAGPNCGWCTKVDFLQEGEPTSARCDDLAALKSKGCP) form the PSI domain. Disulfide bonds link Cys28/Cys46, Cys36/Cys464, Cys39/Cys65, Cys49/Cys76, Cys206/Cys212, Cys260/Cys300, Cys400/Cys414, Cys434/Cys462, Cys466/Cys486, Cys477/Cys489, Cys491/Cys500, Cys502/Cys533, Cys516/Cys531, Cys525/Cys536, Cys538/Cys553, Cys555/Cys576, Cys560/Cys574, Cys568/Cys579, Cys581/Cys590, Cys592/Cys615, Cys599/Cys613, Cys607/Cys618, Cys620/Cys630, Cys633/Cys636, Cys640/Cys691, Cys646/Cys665, Cys649/Cys661, and Cys699/Cys723. The segment at 76–106 (CPEDDIQNPRGRKQKLKDIPITSKGKGERMD) is disordered. Residues Asn109 and Asn131 are each glycosylated (N-linked (GlcNAc...) asparagine). Residues 139 to 377 (DYPIDLYYLM…QLIIDSYNSL (239 aa)) form the VWFA domain. Residues Ser151 and Ser153 each contribute to the Mg(2+) site. Ca(2+) is bound by residues Ser153, Asp156, Asp157, and Glu188. Asn211 and Asn223 each carry an N-linked (GlcNAc...) asparagine glycan. Asn243, Asp245, Pro247, and Glu248 together coordinate Ca(2+). Glu248 is a Mg(2+) binding site. 2 N-linked (GlcNAc...) asparagine glycosylation sites follow: Asn268 and Asn362. The N-linked (GlcNAc...) asparagine glycan is linked to Asn416. I-EGF domains are found at residues 466–501 (CQDKGTPNSPECHFGNGTFECGACRCNDGRIGKECE), 502–554 (CSTD…KYCE), 555–591 (CDNFNCDRSNGLICGGKGICKCRVCECFPNYSGSACD), and 592–631 (CSEDTSTCMAKNGQICNGRGICDCGRCKCTDPKFQGPTCE). Asn481 carries N-linked (GlcNAc...) asparagine glycosylation. N-linked (GlcNAc...) asparagine glycosylation occurs at Asn520. Asn584 carries an N-linked (GlcNAc...) asparagine glycan. The N-linked (GlcNAc...) asparagine glycan is linked to Asn669. A helical membrane pass occupies residues 728–751 (DIIPIVAGVVAGIVLIGLALLLIW). Over 752-798 (KLLMIIHDRREFAKFEKEKMNAKWDTGENPIYKSAVTTVVNPKYEGK) the chain is Cytoplasmic. The residue at position 783 (Tyr783) is a Phosphotyrosine.

Belongs to the integrin beta chain family. In terms of assembly, heterodimer of an alpha and a beta subunit.

It is found in the cell membrane. The protein localises to the cell projection. Its subcellular location is the invadopodium membrane. It localises to the ruffle membrane. The protein resides in the melanosome. It is found in the cleavage furrow. The protein localises to the lamellipodium. Its subcellular location is the ruffle. Beta integrins associate with alpha subunits to form receptor complexes that recognize the sequence R-G-D in a wide array of ligands. May be involved in osteoblast compaction. May play role in myoblast differentiation and fusion during skeletal myogenesis. The sequence is that of Integrin beta-1-A (itgb1-a) from Xenopus laevis (African clawed frog).